A 557-amino-acid polypeptide reads, in one-letter code: Dihydroxy-acid dehydratase (557 aa).

Aspartate 78 contributes to the Mg(2+) binding site. Cysteine 119 is a binding site for [2Fe-2S] cluster. Aspartate 120 and lysine 121 together coordinate Mg(2+). N6-carboxylysine is present on lysine 121. Residue cysteine 192 coordinates [2Fe-2S] cluster. Position 442 (glutamate 442) interacts with Mg(2+). Serine 468 (proton acceptor) is an active-site residue.

Belongs to the IlvD/Edd family. In terms of assembly, homodimer. [2Fe-2S] cluster is required as a cofactor. It depends on Mg(2+) as a cofactor.

The enzyme catalyses (2R)-2,3-dihydroxy-3-methylbutanoate = 3-methyl-2-oxobutanoate + H2O. It catalyses the reaction (2R,3R)-2,3-dihydroxy-3-methylpentanoate = (S)-3-methyl-2-oxopentanoate + H2O. Its pathway is amino-acid biosynthesis; L-isoleucine biosynthesis; L-isoleucine from 2-oxobutanoate: step 3/4. It functions in the pathway amino-acid biosynthesis; L-valine biosynthesis; L-valine from pyruvate: step 3/4. Functionally, functions in the biosynthesis of branched-chain amino acids. Catalyzes the dehydration of (2R,3R)-2,3-dihydroxy-3-methylpentanoate (2,3-dihydroxy-3-methylvalerate) into 2-oxo-3-methylpentanoate (2-oxo-3-methylvalerate) and of (2R)-2,3-dihydroxy-3-methylbutanoate (2,3-dihydroxyisovalerate) into 2-oxo-3-methylbutanoate (2-oxoisovalerate), the penultimate precursor to L-isoleucine and L-valine, respectively. This Bacillus cereus (strain AH820) protein is Dihydroxy-acid dehydratase.